A 266-amino-acid polypeptide reads, in one-letter code: ATP synthase subunit a (266 aa).

Helical transmembrane passes span lysine 38–alanine 58, leucine 99–isoleucine 119, histidine 126–isoleucine 146, glycine 162–valine 182, leucine 191–tyrosine 211, and serine 224–leucine 244.

Belongs to the ATPase A chain family. F-type ATPases have 2 components, CF(1) - the catalytic core - and CF(0) - the membrane proton channel. CF(1) has five subunits: alpha(3), beta(3), gamma(1), delta(1), epsilon(1). CF(0) has three main subunits: a(1), b(2) and c(9-12). The alpha and beta chains form an alternating ring which encloses part of the gamma chain. CF(1) is attached to CF(0) by a central stalk formed by the gamma and epsilon chains, while a peripheral stalk is formed by the delta and b chains.

The protein localises to the cell membrane. Its function is as follows. Key component of the proton channel; it plays a direct role in the translocation of protons across the membrane. This Pseudarthrobacter chlorophenolicus (strain ATCC 700700 / DSM 12829 / CIP 107037 / JCM 12360 / KCTC 9906 / NCIMB 13794 / A6) (Arthrobacter chlorophenolicus) protein is ATP synthase subunit a.